The chain runs to 147 residues: Lysozyme C (147 aa).

The first 18 residues, Met-1–Gly-18, serve as a signal peptide directing secretion. The C-type lysozyme domain maps to Lys-19–Val-147. Intrachain disulfides connect Cys-24-Cys-145, Cys-48-Cys-133, Cys-82-Cys-98, and Cys-94-Cys-112. Residues Glu-53 and Asp-70 contribute to the active site. Substrate is bound at residue Asp-119.

Belongs to the glycosyl hydrolase 22 family. As to quaternary structure, monomer. As to expression, expressed in liver and ovary. Not expressed in bone marrow, lung, spleen, intestine or oviduct.

The protein resides in the secreted. The catalysed reaction is Hydrolysis of (1-&gt;4)-beta-linkages between N-acetylmuramic acid and N-acetyl-D-glucosamine residues in a peptidoglycan and between N-acetyl-D-glucosamine residues in chitodextrins.. Its function is as follows. Lysozymes have primarily a bacteriolytic function; those in tissues and body fluids are associated with the monocyte-macrophage system and enhance the activity of immunoagents. Has bacteriolytic activity against M.luteus. The protein is Lysozyme C of Dromaius novaehollandiae (Emu).